The primary structure comprises 264 residues: Proteasome assembly chaperone 2 (264 aa).

Position 137 is a phosphothreonine (Thr137).

Belongs to the PSMG2 family. As to quaternary structure, forms a heterodimer with PSMG1. The PSMG1-PSMG2 heterodimer interacts directly with the PSMA5 and PSMA7 proteasome alpha subunits. Degraded by the proteasome upon completion of 20S proteasome maturation. As to expression, widely expressed with highest levels in lung, brain and colon. Moderately expressed in muscle, stomach, spleen and heart. Weakly expressed in small intestine, pancreas and liver. Highly expressed in hepatocellular carcinomas with low levels in surrounding liver tissue.

It is found in the nucleus. Its function is as follows. Chaperone protein which promotes assembly of the 20S proteasome as part of a heterodimer with PSMG1. The PSMG1-PSMG2 heterodimer binds to the PSMA5 and PSMA7 proteasome subunits, promotes assembly of the proteasome alpha subunits into the heteroheptameric alpha ring and prevents alpha ring dimerization. The chain is Proteasome assembly chaperone 2 from Homo sapiens (Human).